The following is a 538-amino-acid chain: Probable cytochrome P450 309a2 (538 aa).

Cys483 contributes to the heme binding site.

It belongs to the cytochrome P450 family. Requires heme as cofactor.

The protein resides in the endoplasmic reticulum membrane. It localises to the microsome membrane. Its function is as follows. May be involved in the metabolism of insect hormones and in the breakdown of synthetic insecticides. The polypeptide is Probable cytochrome P450 309a2 (Cyp309a2) (Drosophila melanogaster (Fruit fly)).